The chain runs to 493 residues: Probable cytosol aminopeptidase (493 aa).

Mn(2+) is bound by residues lysine 260 and aspartate 265. The active site involves lysine 272. Residues aspartate 283, aspartate 342, and glutamate 344 each contribute to the Mn(2+) site. Arginine 346 is a catalytic residue.

It belongs to the peptidase M17 family. The cofactor is Mn(2+).

The protein localises to the cytoplasm. It catalyses the reaction Release of an N-terminal amino acid, Xaa-|-Yaa-, in which Xaa is preferably Leu, but may be other amino acids including Pro although not Arg or Lys, and Yaa may be Pro. Amino acid amides and methyl esters are also readily hydrolyzed, but rates on arylamides are exceedingly low.. The enzyme catalyses Release of an N-terminal amino acid, preferentially leucine, but not glutamic or aspartic acids.. In terms of biological role, presumably involved in the processing and regular turnover of intracellular proteins. Catalyzes the removal of unsubstituted N-terminal amino acids from various peptides. The chain is Probable cytosol aminopeptidase from Clostridium perfringens (strain 13 / Type A).